Here is a 289-residue protein sequence, read N- to C-terminus: Glycine--tRNA ligase alpha subunit (289 aa).

Belongs to the class-II aminoacyl-tRNA synthetase family. Tetramer of two alpha and two beta subunits.

The protein resides in the cytoplasm. It catalyses the reaction tRNA(Gly) + glycine + ATP = glycyl-tRNA(Gly) + AMP + diphosphate. This Rickettsia felis (strain ATCC VR-1525 / URRWXCal2) (Rickettsia azadi) protein is Glycine--tRNA ligase alpha subunit.